The sequence spans 427 residues: 3-phosphoshikimate 1-carboxyvinyltransferase (427 aa).

Residues Lys20, Ser21, and Arg25 each contribute to the 3-phosphoshikimate site. Position 20 (Lys20) interacts with phosphoenolpyruvate. 2 residues coordinate phosphoenolpyruvate: Gly92 and Arg120. 4 residues coordinate 3-phosphoshikimate: Ser166, Gln168, Asp312, and Lys339. Gln168 contacts phosphoenolpyruvate. The Proton acceptor role is filled by Asp312. Arg343 and Arg385 together coordinate phosphoenolpyruvate.

Belongs to the EPSP synthase family. Monomer.

The protein resides in the cytoplasm. The catalysed reaction is 3-phosphoshikimate + phosphoenolpyruvate = 5-O-(1-carboxyvinyl)-3-phosphoshikimate + phosphate. The protein operates within metabolic intermediate biosynthesis; chorismate biosynthesis; chorismate from D-erythrose 4-phosphate and phosphoenolpyruvate: step 6/7. Catalyzes the transfer of the enolpyruvyl moiety of phosphoenolpyruvate (PEP) to the 5-hydroxyl of shikimate-3-phosphate (S3P) to produce enolpyruvyl shikimate-3-phosphate and inorganic phosphate. This Streptococcus agalactiae serotype III (strain NEM316) protein is 3-phosphoshikimate 1-carboxyvinyltransferase.